A 309-amino-acid polypeptide reads, in one-letter code: Putative taste receptor type 2 member 36 (309 aa).

Residue Met1 is a topological domain, extracellular. The helical transmembrane segment at 2-22 (ICFLLIILSILVVFAFVLGNF) threads the bilayer. The Cytoplasmic portion of the chain corresponds to 23–46 (SNGFIALVNVIDWVKRQKISSADQ). Residues 47–67 (ILTALVVSRVGLLWVILLHWY) traverse the membrane as a helical segment. Residues 68–79 (SNVLNSALYSSE) are Extracellular-facing. Residues 80–100 (VIIFISNAWAIINHFSIWLAT) form a helical membrane-spanning segment. Residues 101–126 (SLSIFYLLKIVNFSRLIFHHLKRKAK) are Cytoplasmic-facing. The helical transmembrane segment at 127–147 (SVVLVIVLGPLVFLVCHLVMK) threads the bilayer. The Extracellular segment spans residues 148–181 (HTYINVWTKEYEGNVTWKIKLRNAIHLSNLTVST). 2 N-linked (GlcNAc...) asparagine glycosylation sites follow: Asn161 and Asn176. A helical membrane pass occupies residues 182–202 (LANLIPFTLTLISFLLLIYSL). Residues 203–229 (CKHLKKMQLHGKGSQDPSTKVHIKALQ) are Cytoplasmic-facing. A helical membrane pass occupies residues 230–250 (TVTSFLLLCAIYFLSMIISVC). Over 251–259 (NFGRLEKQP) the chain is Extracellular. A helical transmembrane segment spans residues 260–280 (VFMFCQAIIFSYPSTHPFILI). At 281–309 (LGNKKLKQIFLSVFWQMRYWVKGEKPSSP) the chain is on the cytoplasmic side.

This sequence belongs to the G-protein coupled receptor T2R family.

The protein resides in the membrane. Functionally, putative taste receptor which may play a role in the perception of bitterness. The polypeptide is Putative taste receptor type 2 member 36 (Homo sapiens (Human)).